Reading from the N-terminus, the 187-residue chain is UPF0301 protein Pcryo_0062 (187 aa).

Belongs to the UPF0301 (AlgH) family.

In Psychrobacter cryohalolentis (strain ATCC BAA-1226 / DSM 17306 / VKM B-2378 / K5), this protein is UPF0301 protein Pcryo_0062.